A 125-amino-acid chain; its full sequence is Large ribosomal subunit protein uL22 (125 aa).

This sequence belongs to the universal ribosomal protein uL22 family. In terms of assembly, part of the 50S ribosomal subunit.

Functionally, this protein binds specifically to 23S rRNA; its binding is stimulated by other ribosomal proteins, e.g. L4, L17, and L20. It is important during the early stages of 50S assembly. It makes multiple contacts with different domains of the 23S rRNA in the assembled 50S subunit and ribosome. The globular domain of the protein is located near the polypeptide exit tunnel on the outside of the subunit, while an extended beta-hairpin is found that lines the wall of the exit tunnel in the center of the 70S ribosome. This is Large ribosomal subunit protein uL22 from Novosphingobium aromaticivorans (strain ATCC 700278 / DSM 12444 / CCUG 56034 / CIP 105152 / NBRC 16084 / F199).